Consider the following 559-residue polypeptide: MSHPVENVVAAENTEKRPTNFIRQIIDEDLASGKHTGVQTRFPPEPNGYLHIGHAKSICLNFGIAEDYQGLCNLRFDDTNPVKEDVEYVDSIKQDVEWLGFKWEGEPRYASDYFDQLYGYAIELIEKGLAYVDELSPEEMREYRGTLTEPGKNSPYRDRSIEENLALFEKMKNGEIAEGKACLRAKIDMASPFIVMRDPVIYRIKFATHHQTGDKWCIYPMYDFTHCISDAIERITHSLCTLEFQDNRRLYDWVLENISIARPLPHQYEFSRLNLESTLTSKRKLLQLVNEGIVDGWNDPRMPTISGLRRRGYTPASLREFCRRIGVTKQDNMVEFSALEACIREDLNENAPRAMAVINPLKIVIENFSGKEMLTAPNHPNRDELGVRELPFTRELYIDQADFREEANKQYKRLVLGKEVRLRNAYVIKAERVEKDAEENITTVYCTYDPDTLGKNPADGRKVKGVIQWVSAEDYLPAEFRQYGRLFTVANPGAAEDIHQVLNPDSLVIKQGVVEKSLANAQPEKAYQFEREGYYCADSKDSRPDHLVFNLTVSLKEGF.

The short motif at 44-54 is the 'HIGH' region element; the sequence is PEPNGYLHIGH. Residues 45 to 47 and 51 to 57 contribute to the ATP site; these read EPN and HIGHAKS. L-glutamine-binding residues include Asp-77 and Tyr-222. Residues Thr-241 and 272 to 273 each bind ATP; that span reads RL. The 'KMSKS' region motif lies at 279-283; that stretch reads LTSKR.

Belongs to the class-I aminoacyl-tRNA synthetase family. In terms of assembly, monomer.

It localises to the cytoplasm. It catalyses the reaction tRNA(Gln) + L-glutamine + ATP = L-glutaminyl-tRNA(Gln) + AMP + diphosphate. The sequence is that of Glutamine--tRNA ligase from Pasteurella multocida (strain Pm70).